A 192-amino-acid chain; its full sequence is Phosphoheptose isomerase (192 aa).

The SIS domain maps to 37–192; sequence LADSFKQEGK…IQLVEKEMAK (156 aa). 52-54 is a substrate binding site; the sequence is NGG. Zn(2+) contacts are provided by H61 and E65. Substrate is bound by residues E65, 93 to 94, 119 to 121, S124, and Q172; these read ND and STS. Zn(2+)-binding residues include Q172 and H180.

It belongs to the SIS family. GmhA subfamily. In terms of assembly, homotetramer. The cofactor is Zn(2+).

It is found in the cytoplasm. The enzyme catalyses 2 D-sedoheptulose 7-phosphate = D-glycero-alpha-D-manno-heptose 7-phosphate + D-glycero-beta-D-manno-heptose 7-phosphate. The protein operates within carbohydrate biosynthesis; D-glycero-D-manno-heptose 7-phosphate biosynthesis; D-glycero-alpha-D-manno-heptose 7-phosphate and D-glycero-beta-D-manno-heptose 7-phosphate from sedoheptulose 7-phosphate: step 1/1. Its function is as follows. Catalyzes the isomerization of sedoheptulose 7-phosphate in D-glycero-D-manno-heptose 7-phosphate. The polypeptide is Phosphoheptose isomerase (Aeromonas hydrophila subsp. hydrophila (strain ATCC 7966 / DSM 30187 / BCRC 13018 / CCUG 14551 / JCM 1027 / KCTC 2358 / NCIMB 9240 / NCTC 8049)).